The following is a 331-amino-acid chain: uncharacterized protein (331 aa).

Belongs to the ornithine cyclodeaminase/mu-crystallin family.

This is an uncharacterized protein from Sinorhizobium fredii (strain NBRC 101917 / NGR234).